The following is a 293-amino-acid chain: tRNA-cytidine(32) 2-sulfurtransferase (293 aa).

The PP-loop motif signature appears at 62 to 67 (SGGKDS). C137, C140, and C228 together coordinate [4Fe-4S] cluster.

It belongs to the TtcA family. In terms of assembly, homodimer. Requires Mg(2+) as cofactor. [4Fe-4S] cluster is required as a cofactor.

It is found in the cytoplasm. It catalyses the reaction cytidine(32) in tRNA + S-sulfanyl-L-cysteinyl-[cysteine desulfurase] + AH2 + ATP = 2-thiocytidine(32) in tRNA + L-cysteinyl-[cysteine desulfurase] + A + AMP + diphosphate + H(+). It functions in the pathway tRNA modification. Catalyzes the ATP-dependent 2-thiolation of cytidine in position 32 of tRNA, to form 2-thiocytidine (s(2)C32). The sulfur atoms are provided by the cysteine/cysteine desulfurase (IscS) system. This Brucella suis (strain ATCC 23445 / NCTC 10510) protein is tRNA-cytidine(32) 2-sulfurtransferase.